The chain runs to 441 residues: Glutamate--tRNA ligase 2 (441 aa).

The 'HIGH' region signature appears at 9–19 (PSPTGYIHVGN). A 'KMSKS' region motif is present at residues 239–243 (ALSKR). Residue Lys-242 participates in ATP binding.

Belongs to the class-I aminoacyl-tRNA synthetase family. Glutamate--tRNA ligase type 1 subfamily. Monomer.

It is found in the cytoplasm. The enzyme catalyses tRNA(Glu) + L-glutamate + ATP = L-glutamyl-tRNA(Glu) + AMP + diphosphate. Catalyzes the attachment of glutamate to tRNA(Glu) in a two-step reaction: glutamate is first activated by ATP to form Glu-AMP and then transferred to the acceptor end of tRNA(Glu). This Cereibacter sphaeroides (strain ATCC 17023 / DSM 158 / JCM 6121 / CCUG 31486 / LMG 2827 / NBRC 12203 / NCIMB 8253 / ATH 2.4.1.) (Rhodobacter sphaeroides) protein is Glutamate--tRNA ligase 2.